The sequence spans 423 residues: RNA polymerase sigma factor SigA (423 aa).

A disordered region spans residues 1 to 76; it reads MKKSKRKNAQ…EEDLPIPKIS (76 aa). Acidic residues predominate over residues 21–70; sequence VQEEAEELPEFPEGEPDPDLEDPDLALEDDLLDLPEEGEGLDLEEEEEDL. A sigma-70 factor domain-1 region spans residues 78–113; it reads SDPVRQYLHEIGQVPLLTLEEEVELARKVEEGMEAI. The tract at residues 187 to 257 is sigma-70 factor domain-2; it reads LIEANLRLVV…NRAIADQART (71 aa). The short motif at 211-214 is the Interaction with polymerase core subunit RpoC element; sequence DLIQ. Residues 266–344 are sigma-70 factor domain-3; that stretch reads ETINKLSRTA…DEHLPSPVDA (79 aa). The interval 357–409 is sigma-70 factor domain-4; it reads ALSKLSEREAMVLKLRKGLIDGREHTLEEVGAFFGVTRERIRQIENKALRKLK. Positions 383-402 form a DNA-binding region, H-T-H motif; the sequence is LEEVGAFFGVTRERIRQIEN.

The protein belongs to the sigma-70 factor family. RpoD/SigA subfamily. In terms of assembly, interacts transiently with the RNA polymerase catalytic core formed by RpoA, RpoB, RpoC and RpoZ (2 alpha, 1 beta, 1 beta' and 1 omega subunit) to form the RNA polymerase holoenzyme that can initiate transcription.

It localises to the cytoplasm. Sigma factors are initiation factors that promote the attachment of RNA polymerase to specific initiation sites and are then released. This sigma factor is the primary sigma factor during exponential growth. This chain is RNA polymerase sigma factor SigA, found in Thermus thermophilus (strain ATCC BAA-163 / DSM 7039 / HB27).